We begin with the raw amino-acid sequence, 86 residues long: Arminin 7246 (86 aa).

An N-terminal signal peptide occupies residues 1 to 18 (MRPEYAVLFLALIALTYA). Positions 19-57 (RSNEDVREEIKNEIEKDILEDLVEDEGELDDKAIDVNDA) are excised as a propeptide. At alanine 83 the chain carries Alanine amide.

It belongs to the arminin family. In terms of tissue distribution, expressed in entodermal epithelium along the body column.

Its subcellular location is the secreted. It is found in the target cell membrane. Antimicrobial peptide with a broad-spectrum antimicrobial activity. Keeps its antibacterial activity under a wide range of salt concentrations that mimic physiological conditions of human blood, which is surprising, since Hydra is an obligate freshwater animal with nearly no salt tolerance. Does not affect red blood cells. The sequence is that of Arminin 7246 from Hydra viridissima (Green hydra).